The primary structure comprises 91 residues: PqqA binding protein (91 aa).

This sequence belongs to the PqqD family. In terms of assembly, monomer. Interacts with PqqE.

It participates in cofactor biosynthesis; pyrroloquinoline quinone biosynthesis. In terms of biological role, functions as a PqqA binding protein and presents PqqA to PqqE, in the pyrroloquinoline quinone (PQQ) biosynthetic pathway. This Pseudomonas putida (strain W619) protein is PqqA binding protein.